We begin with the raw amino-acid sequence, 40 residues long: Photosystem II reaction center protein J (40 aa).

A helical transmembrane segment spans residues 8–28; the sequence is IPLWIIGTVTGILVIGLIGIF.

This sequence belongs to the PsbJ family. PSII is composed of 1 copy each of membrane proteins PsbA, PsbB, PsbC, PsbD, PsbE, PsbF, PsbH, PsbI, PsbJ, PsbK, PsbL, PsbM, PsbT, PsbX, PsbY, PsbZ, Psb30/Ycf12, at least 3 peripheral proteins of the oxygen-evolving complex and a large number of cofactors. It forms dimeric complexes.

It localises to the plastid. It is found in the chloroplast thylakoid membrane. Functionally, one of the components of the core complex of photosystem II (PSII). PSII is a light-driven water:plastoquinone oxidoreductase that uses light energy to abstract electrons from H(2)O, generating O(2) and a proton gradient subsequently used for ATP formation. It consists of a core antenna complex that captures photons, and an electron transfer chain that converts photonic excitation into a charge separation. The sequence is that of Photosystem II reaction center protein J from Eucalyptus globulus subsp. globulus (Tasmanian blue gum).